A 25-amino-acid chain; its full sequence is Unknown protein 4 (25 aa).

Positions 1–10 (IEHNAEEIRK) are enriched in basic and acidic residues. Positions 1-25 (IEHNAEEIRKTAIRTAVQNTAQQTK) are disordered. A compositionally biased stretch (polar residues) spans 16–25 (AVQNTAQQTK).

This Lonomia obliqua (Moth) protein is Unknown protein 4.